We begin with the raw amino-acid sequence, 355 residues long: Protein-glutamate methylesterase/protein-glutamine glutaminase (355 aa).

One can recognise a Response regulatory domain in the interval 3–121 (NVLVVEDSPV…HPDHEATARK (119 aa)). Asp-54 carries the post-translational modification 4-aspartylphosphate. The CheB-type methylesterase domain maps to 154–348 (PLLNRVAPAR…AALTNLVAER (195 aa)). Active-site residues include Ser-170, His-197, and Asp-290.

This sequence belongs to the CheB family. Post-translationally, phosphorylated by CheA. Phosphorylation of the N-terminal regulatory domain activates the methylesterase activity.

Its subcellular location is the cytoplasm. The enzyme catalyses [protein]-L-glutamate 5-O-methyl ester + H2O = L-glutamyl-[protein] + methanol + H(+). It catalyses the reaction L-glutaminyl-[protein] + H2O = L-glutamyl-[protein] + NH4(+). Involved in chemotaxis. Part of a chemotaxis signal transduction system that modulates chemotaxis in response to various stimuli. Catalyzes the demethylation of specific methylglutamate residues introduced into the chemoreceptors (methyl-accepting chemotaxis proteins or MCP) by CheR. Also mediates the irreversible deamidation of specific glutamine residues to glutamic acid. This chain is Protein-glutamate methylesterase/protein-glutamine glutaminase, found in Nitrosospira multiformis (strain ATCC 25196 / NCIMB 11849 / C 71).